Consider the following 208-residue polypeptide: MLNSRSELLDQFLRQQGIRDEAILAAIRELPRERFIPEALSHQAYQNNALPIGEGQTISQPYIVAKMTELLELTPTSNVLEVGTGSGYQTAVLAKLVEHVNSIERIKSLQWNAKRLLKQLDIYNVSTKHGDGWKGWESKAPFDAIIVTAAAESIPNDLLFQLKDNGHLVIPIGEESQQLLRITRQGEEFFSEVIEEVRFVPLVAGELA.

S59 is an active-site residue.

Belongs to the methyltransferase superfamily. L-isoaspartyl/D-aspartyl protein methyltransferase family.

The protein resides in the cytoplasm. The catalysed reaction is [protein]-L-isoaspartate + S-adenosyl-L-methionine = [protein]-L-isoaspartate alpha-methyl ester + S-adenosyl-L-homocysteine. Catalyzes the methyl esterification of L-isoaspartyl residues in peptides and proteins that result from spontaneous decomposition of normal L-aspartyl and L-asparaginyl residues. It plays a role in the repair and/or degradation of damaged proteins. In Aliivibrio fischeri (strain ATCC 700601 / ES114) (Vibrio fischeri), this protein is Protein-L-isoaspartate O-methyltransferase.